Reading from the N-terminus, the 485-residue chain is Cysteine--tRNA ligase (485 aa).

Cys27 is a binding site for Zn(2+). Residues Ile29–His39 carry the 'HIGH' region motif. Zn(2+)-binding residues include Cys208, His233, and Glu237. The 'KMSKS' region motif lies at Lys265–Ser269. Lys268 serves as a coordination point for ATP.

Belongs to the class-I aminoacyl-tRNA synthetase family. In terms of assembly, monomer. Zn(2+) is required as a cofactor.

Its subcellular location is the cytoplasm. It catalyses the reaction tRNA(Cys) + L-cysteine + ATP = L-cysteinyl-tRNA(Cys) + AMP + diphosphate. The polypeptide is Cysteine--tRNA ligase (Oleidesulfovibrio alaskensis (strain ATCC BAA-1058 / DSM 17464 / G20) (Desulfovibrio alaskensis)).